The sequence spans 120 residues: UPF0231 protein KPK_4613 (120 aa).

It belongs to the UPF0231 family.

This Klebsiella pneumoniae (strain 342) protein is UPF0231 protein KPK_4613.